We begin with the raw amino-acid sequence, 229 residues long: Platelet-activating factor acetylhydrolase IB subunit alpha2 (229 aa).

Catalysis depends on residues serine 48, aspartate 193, and histidine 196.

It belongs to the 'GDSL' lipolytic enzyme family. Platelet-activating factor acetylhydrolase IB beta/gamma subunits subfamily. As to quaternary structure, forms a catalytic dimer which is either homodimer (alpha2/alpha2 homodimer) or heterodimer with PAFAH1B3 (alpha2/alpha1 heterodimer). Component of the cytosolic (PAF-AH (I)) heterotetrameric enzyme, which is composed of PAFAH1B1 (beta), PAFAH1B2 (alpha2) and PAFAH1B3 (alpha1) subunits. The catalytic activity of the enzyme resides in the alpha1 (PAFAH1B3) and alpha2 (PAFAH1B2) subunits, whereas the beta subunit (PAFAH1B1) has regulatory activity. Trimer formation is not essential for the catalytic activity.

It localises to the cytoplasm. It carries out the reaction a 1-O-alkyl-2-acetyl-sn-glycero-3-phosphocholine + H2O = a 1-O-alkyl-sn-glycero-3-phosphocholine + acetate + H(+). It catalyses the reaction 1-O-hexadecyl-2-acetyl-sn-glycero-3-phosphocholine + H2O = 1-O-hexadecyl-sn-glycero-3-phosphocholine + acetate + H(+). The enzyme catalyses 1-O-hexadecyl-2-acetyl-sn-glycero-3-phosphate + H2O = 1-O-hexadecyl-sn-glycero-3-phosphate + acetate + H(+). The catalysed reaction is 1-O-hexadecyl-2-acetyl-sn-glycero-3-phosphoethanolamine + H2O = 1-O-hexadecyl-sn-glycero-3-phosphoethanolamine + acetate + H(+). Its function is as follows. Alpha2 catalytic subunit of the cytosolic type I platelet-activating factor (PAF) acetylhydrolase (PAF-AH (I)) heterotetrameric enzyme that catalyzes the hydrolyze of the acetyl group at the sn-2 position of PAF and its analogs and modulates the action of PAF. The protein is Platelet-activating factor acetylhydrolase IB subunit alpha2 (PAFAH1B2) of Gallus gallus (Chicken).